Consider the following 405-residue polypeptide: Mitochondrial outer membrane protein SLC25A46 (405 aa).

A disordered region spans residues 1–77 (MTSRRPDSFE…PDEAQSAAPP (77 aa)). Residues 22–37 (FSGGYSGRSFNNSSSS) show a composition bias toward low complexity. The stretch at 80–171 (QLNRFAGFGI…GIISECTPLP (92 aa)) is one Solcar 1 repeat. The next 6 membrane-spanning stretches (helical) occupy residues 87-107 (FGIG…CIVF), 151-171 (FVVQ…TPLP), 183-203 (VVGH…FYSA), 242-262 (LLPL…HYII), 302-322 (FPEL…LFPL), and 371-391 (MGFY…ATVL). The stretch at 299–401 (DAYFPELMAS…QITKMIYSTL (103 aa)) is one Solcar 2 repeat.

The protein belongs to the mitochondrial carrier (TC 2.A.29) family.

The protein localises to the mitochondrion outer membrane. Functionally, transmembrane protein of the mitochondrial outer membrane that controls mitochondrial organization. May regulate the biogenesis and dynamics of mitochondrial cristae, the inwards folds of the inner mitochondrial membrane. Could regulate mitochondrial lipid homeostasis and thereby mitochondrial fission. The sequence is that of Mitochondrial outer membrane protein SLC25A46 (slc25a46) from Danio rerio (Zebrafish).